Consider the following 258-residue polypeptide: MVLIRVLANLLIIQLSYAQKSSELVIGGDECNINEHRSLVVLFNSSGALCGGTLINQEYVLAAAHCDMPNMQILLGVHSASVLNDDEQARDPEEKYFCLSSNNDTKWDKDIMLIRLNRPVNNSVHIAPLSLPSSPPSVGSVCRIMGWGKTIPTQETHPDVPHCANIKLFHYSLCRAVYVGMPAQSRILCAGILQGGIGSCQGDSGGPLICNGQFQGIVSATSKPCAHSLMPALYIKVFDYTDWIKSIIAGNTTVTCPP.

The first 18 residues, 1-18, serve as a signal peptide directing secretion; that stretch reads MVLIRVLANLLIIQLSYA. The propeptide occupies 19-24; sequence QKSSEL. Residues 25-249 enclose the Peptidase S1 domain; the sequence is VIGGDECNIN…YTDWIKSIIA (225 aa). Disulfide bonds link C31/C163, C50/C66, C98/C256, C142/C210, C174/C189, and C200/C225. N-linked (GlcNAc...) asparagine glycosylation is present at N44. H65 acts as the Charge relay system in catalysis. N103 carries N-linked (GlcNAc...) asparagine glycosylation. The Charge relay system role is filled by D110. An N-linked (GlcNAc...) asparagine glycan is attached at N121. S204 functions as the Charge relay system in the catalytic mechanism. N251 carries N-linked (GlcNAc...) asparagine glycosylation.

It belongs to the peptidase S1 family. Snake venom subfamily. Monomer. Expressed by the venom gland.

Its subcellular location is the secreted. Its function is as follows. Snake venom serine protease that may act in the hemostasis system of the prey. The chain is Snake venom serine protease CL2 from Trimeresurus stejnegeri (Chinese green tree viper).